The chain runs to 420 residues: Small ribosomal subunit protein mS75 (420 aa).

The transit peptide at 1–11 (MYNLSRIIYRF) directs the protein to the mitochondrion. Disordered regions lie at residues 99–120 (RQKNAANPSSDNTPSDSGDVMS) and 390–420 (RYSPANQKRRSKRKQKRKERRIACLKAGKQT). Residues 102–114 (NAANPSSDNTPSD) are compositionally biased toward polar residues. A compositionally biased stretch (basic residues) spans 396 to 409 (QKRRSKRKQKRKER).

In terms of assembly, component of the mitochondrial ribosome small subunit. In terms of tissue distribution, expressed at high levels in reproductive organs and, at lower levels, ubiquitously.

Its subcellular location is the mitochondrion. Its function is as follows. Essential for fertility (male and female gametophyte functions and development). Required for the integrity of female gametic mitochondria. Modulates male gametophyte functions, including pollen tube growth and style penetration. Involved in mitochondrial-driven cell-to-cell communication in embryo sacs during female gametes maturation (including embryogenesis initiation and endosperm development), especially for reciprocal signaling between central and egg cells which regulates reciprocal development. This is Small ribosomal subunit protein mS75 from Arabidopsis thaliana (Mouse-ear cress).